We begin with the raw amino-acid sequence, 134 residues long: MARVKRGVAAHAKHKKVLKAAKGFYGRRKNTIRTAKAAVDRAKQYAYRDRKVNKRNFRALWIQRINAAVREFGLTYGRFIDGLNKAGIEVDRKVLSDMAIHEPEAFGALVAAAKKALEYLKETGTANEFEGAVR.

This sequence belongs to the bacterial ribosomal protein bL20 family.

Its function is as follows. Binds directly to 23S ribosomal RNA and is necessary for the in vitro assembly process of the 50S ribosomal subunit. It is not involved in the protein synthesizing functions of that subunit. In Rhizobium etli (strain ATCC 51251 / DSM 11541 / JCM 21823 / NBRC 15573 / CFN 42), this protein is Large ribosomal subunit protein bL20.